Consider the following 131-residue polypeptide: Histone H2B (131 aa).

Residues 1–19 (MAPKAEKKPASKAPAEKKP) show a composition bias toward basic and acidic residues. Residues 1-38 (MAPKAEKKPASKAPAEKKPAAKKTASSTDGGKKRTKAR) form a disordered region. An N6-acetyllysine; alternate mark is found at K7 and K8. Residues K7 and K8 each participate in a glycyl lysine isopeptide (Lys-Gly) (interchain with G-Cter in SUMO); alternate cross-link. S11 is modified (phosphoserine). K12 is subject to N6-acetyllysine. K17 carries the N6-acetyllysine; alternate modification. A Glycyl lysine isopeptide (Lys-Gly) (interchain with G-Cter in SUMO); alternate cross-link involves residue K17. K18 participates in a covalent cross-link: Glycyl lysine isopeptide (Lys-Gly) (interchain with G-Cter in SUMO). K125 participates in a covalent cross-link: Glycyl lysine isopeptide (Lys-Gly) (interchain with G-Cter in ubiquitin).

This sequence belongs to the histone H2B family. The nucleosome is a histone octamer containing two molecules each of H2A, H2B, H3 and H4 assembled in one H3-H4 heterotetramer and two H2A-H2B heterodimers. The octamer wraps approximately 147 bp of DNA. Post-translationally, monoubiquitinated by the UBC2-BRE1 complex to form H2BK123ub1. H2BK123ub1 gives a specific tag for epigenetic transcriptional activation and is also prerequisite for H3K4me and H3K79me formation. H2BK123ub1 also modulates the formation of double-strand breaks during meiosis and is a prerequisite for DNA-damage checkpoint activation. Phosphorylated by STE20 to form H2BS10ph during progression through meiotic prophase. May be correlated with chromosome condensation. In terms of processing, acetylated by GCN5 to form H2BK11ac and H2BK16ac. H2BK16ac can also be formed by ESA1. Acetylation of N-terminal lysines and particularly formation of H2BK11acK16ac has a positive effect on transcription. Post-translationally, sumoylation to form H2BK6su or H2BK7su, and probably also H2BK16su or H2BK17su, occurs preferentially near the telomeres and represses gene transcription.

It localises to the nucleus. It is found in the chromosome. Core component of nucleosome. Nucleosomes wrap and compact DNA into chromatin, limiting DNA accessibility to the cellular machineries which require DNA as a template. Histones thereby play a central role in transcription regulation, DNA repair, DNA replication and chromosomal stability. DNA accessibility is regulated via a complex set of post-translational modifications of histones, also called histone code, and nucleosome remodeling. In Lodderomyces elongisporus (strain ATCC 11503 / CBS 2605 / JCM 1781 / NBRC 1676 / NRRL YB-4239) (Yeast), this protein is Histone H2B (HTB1).